Here is a 116-residue protein sequence, read N- to C-terminus: MRHYEIVFMVHPDQSEQVPGMIERYSETIKQGGGQIHRLEDWGRRQLAYPINKLHKAHYVLLNIEASAEVVEELETAFRYNDAVLRNMIMRKKESITEPSPLTKPKEDRKGDSEAA.

The disordered stretch occupies residues 94-116 (ESITEPSPLTKPKEDRKGDSEAA). A compositionally biased stretch (basic and acidic residues) spans 104 to 116 (KPKEDRKGDSEAA).

This sequence belongs to the bacterial ribosomal protein bS6 family.

Its function is as follows. Binds together with bS18 to 16S ribosomal RNA. This is Small ribosomal subunit protein bS6 from Idiomarina loihiensis (strain ATCC BAA-735 / DSM 15497 / L2-TR).